The sequence spans 534 residues: Pentatricopeptide repeat-containing protein At1g07590, mitochondrial (534 aa).

The transit peptide at Met1–Arg20 directs the protein to the mitochondrion. 9 PPR repeats span residues Asn165–Thr199, Ser200–Pro234, His235–Pro269, Asn270–Ser300, Asn305–Phe335, Arg339–Val369, Glu374–Pro408, Asn409–Lys443, and Trp451–Arg485.

Belongs to the PPR family. P subfamily.

It localises to the mitochondrion. The chain is Pentatricopeptide repeat-containing protein At1g07590, mitochondrial from Arabidopsis thaliana (Mouse-ear cress).